The primary structure comprises 153 residues: MKFCKPKPKSILSLDIGSKRIGLAYCDPLCITSNILPAVKRFENNQEIKIIRNYINEFNLTGFIVGIPLDEKGKMTTQAIDCKNYGQLLSNELKLPFSYVNEHSSTWESSERFGIKKDKSGLIDSFSAKIILEQWIEEGPELEEIAGKRQIKD.

It belongs to the YqgF nuclease family.

It is found in the cytoplasm. In terms of biological role, could be a nuclease involved in processing of the 5'-end of pre-16S rRNA. The sequence is that of Putative pre-16S rRNA nuclease from Prochlorococcus marinus (strain MIT 9301).